Consider the following 243-residue polypeptide: Probable fructoselysine utilization operon transcriptional repressor (243 aa).

Residues 10–78 (QLLYATVRQR…QGKGTFVQSQ (69 aa)) form the HTH gntR-type domain. Positions 38–57 (ENELCTQYNVSRITIRKAIS) form a DNA-binding region, H-T-H motif.

Its pathway is carbohydrate metabolism; fructoselysine degradation [regulation]. In terms of biological role, may regulate the transcription of the frlABCDR operon, involved in the utilization of fructoselysine and psicoselysine. The sequence is that of Probable fructoselysine utilization operon transcriptional repressor from Escherichia coli (strain K12).